An 859-amino-acid polypeptide reads, in one-letter code: Volume-regulated anion channel subunit LRRC8D (859 aa).

Over 1–22 (MFTLAEVASLNDIQPTYRILKP) the chain is Cytoplasmic. Residues 23 to 48 (WWDVFMDYLAVVMLMVAIFAGTMQLT) form a helical membrane-spanning segment. The Extracellular segment spans residues 49–164 (KDQVVCLPVL…YHLALPWYSK (116 aa)). A disulfide bond links cysteine 54 and cysteine 355. The disordered stretch occupies residues 110–138 (IPLQATHPHAESTLPNQEAKKEKRDPTGR). Positions 127-138 (EAKKEKRDPTGR) are enriched in basic and acidic residues. A helical transmembrane segment spans residues 165–183 (YFPYLALIHTIILMVSSNF). The Cytoplasmic segment spans residues 184–309 (WFKYPKTCSK…EDSDLIYKLY (126 aa)). The tract at residues 222-252 (SEENKQRITGAQTLPKHVSTSSDEGSPSAST) is disordered. Positions 228–252 (RITGAQTLPKHVSTSSDEGSPSAST) are enriched in polar residues. 3 positions are modified to phosphoserine: serine 242, serine 243, and serine 247. A helical transmembrane segment spans residues 310 to 331 (VVQTLIKTAKFIFILCYTANFV). Residues 332–361 (NAISFEHVCKPKVEHLTGYEVFECTHNMAY) lie on the Extracellular side of the membrane. Residues 362 to 387 (MLKKLLISYISIICVYGFICLYTLFW) form a helical membrane-spanning segment. Residues 388 to 859 (LFRIPLKEYS…DVNVPFANGI (472 aa)) lie on the Cytoplasmic side of the membrane. LRR repeat units follow at residues 515-535 (NLQE…AFSF), 539-560 (HLRC…VYLL), 562-583 (NLRE…IGLE), 590-610 (HLKI…ITDV), 613-633 (HLTK…NSLK), 637-658 (NVAE…IFSL), 660-681 (NLQE…ISFQ), 685-706 (RLTC…ITHV), 708-729 (NLES…VFSL), 731-752 (KLRC…IGLL), 754-775 (NLQH…LFKC), 777-798 (KLRT…ISQL), and 800-821 (QLTQ…LGQC).

The protein belongs to the LRRC8 family. As to quaternary structure, heterohexamer; oligomerizes with other LRRC8 proteins (LRRC8A, LRRC8B, LRRC8C and/or LRRC8E) to form a heterohexamer. In vivo, the subunit composition may depend primarily on expression levels, and heterooligomeric channels containing various proportions of the different LRRC8 proteins may coexist. Expressed in pancreatic beta cells. Also expressed in glucagon-secreting pancreatic alpha cells.

The protein resides in the cell membrane. The protein localises to the endoplasmic reticulum membrane. The enzyme catalyses chloride(in) = chloride(out). The catalysed reaction is iodide(out) = iodide(in). It carries out the reaction taurine(out) = taurine(in). Its function is as follows. Non-essential component of the volume-regulated anion channel (VRAC, also named VSOAC channel), an anion channel required to maintain a constant cell volume in response to extracellular or intracellular osmotic changes. The VRAC channel conducts iodide better than chloride and can also conduct organic osmolytes like taurine. Plays a redundant role in the efflux of amino acids, such as aspartate, in response to osmotic stress family member (LRRC8B, LRRC8C, LRRC8D or LRRC8E); channel characteristics depend on the precise subunit composition. Also acts as a regulator of glucose-sensing in pancreatic beta cells: VRAC currents, generated in response to hypotonicity- or glucose-induced beta cell swelling, depolarize cells, thereby causing electrical excitation, leading to increase glucose sensitivity and insulin secretion. VRAC channels containing LRRC8D inhibit transport of immunoreactive cyclic dinucleotide GMP-AMP (2'-3'-cGAMP), an immune messenger produced in response to DNA virus in the cytosol. This is Volume-regulated anion channel subunit LRRC8D from Mus musculus (Mouse).